Here is a 243-residue protein sequence, read N- to C-terminus: tRNA (guanine-N(1)-)-methyltransferase (243 aa).

S-adenosyl-L-methionine contacts are provided by residues G111 and 131-136 (IGDYVL).

This sequence belongs to the RNA methyltransferase TrmD family. Homodimer.

Its subcellular location is the cytoplasm. The enzyme catalyses guanosine(37) in tRNA + S-adenosyl-L-methionine = N(1)-methylguanosine(37) in tRNA + S-adenosyl-L-homocysteine + H(+). Its function is as follows. Specifically methylates guanosine-37 in various tRNAs. This chain is tRNA (guanine-N(1)-)-methyltransferase, found in Brevibacillus brevis (strain 47 / JCM 6285 / NBRC 100599).